A 458-amino-acid polypeptide reads, in one-letter code: Monomethylamine methyltransferase MtmB1 (458 aa).

O202 is a non-standard amino acid (pyrrolysine).

The protein belongs to the monomethylamine methyltransferase family. In terms of assembly, dimer of homotrimers. Can form a complex with MtmC (MtmC1 or MtmC2).

The enzyme catalyses Co(I)-[methylamine-specific corrinoid protein] + methylamine + H(+) = methyl-Co(III)-[methylamine-specific corrinoid protein] + NH4(+). The protein operates within one-carbon metabolism; methanogenesis from methylamine. Functionally, catalyzes the transfer of the methyl group from monomethylamine to the corrinoid cofactor of MtmC (MtmC1 or MtmC2). In Methanosarcina barkeri, this protein is Monomethylamine methyltransferase MtmB1 (mtmB1).